Consider the following 196-residue polypeptide: MSSKEQKTPEGQAPEEIITEQHDDVEAVEPEVSAEQVDPRDEKIANLEAQLAEAQKREREVMLRAKADEDNLRRRTEQDIEKAHKFALEKFVNELLPVIDSLDRALEVADKANPELAPMVEGIELTLKSMLDVVRKFGVEVIADTNVPLDPNVHQAIAMVESEDVAAGNVLAVMQKGYTLNGRTIRAAMVTVAKAK.

A disordered region spans residues 1–41; it reads MSSKEQKTPEGQAPEEIITEQHDDVEAVEPEVSAEQVDPRD.

The protein belongs to the GrpE family. Homodimer.

The protein localises to the cytoplasm. Participates actively in the response to hyperosmotic and heat shock by preventing the aggregation of stress-denatured proteins, in association with DnaK and GrpE. It is the nucleotide exchange factor for DnaK and may function as a thermosensor. Unfolded proteins bind initially to DnaJ; upon interaction with the DnaJ-bound protein, DnaK hydrolyzes its bound ATP, resulting in the formation of a stable complex. GrpE releases ADP from DnaK; ATP binding to DnaK triggers the release of the substrate protein, thus completing the reaction cycle. Several rounds of ATP-dependent interactions between DnaJ, DnaK and GrpE are required for fully efficient folding. In Klebsiella pneumoniae subsp. pneumoniae (strain ATCC 700721 / MGH 78578), this protein is Protein GrpE.